A 106-amino-acid chain; its full sequence is UPF0145 protein PFL_3418 (106 aa).

This sequence belongs to the UPF0145 family.

The chain is UPF0145 protein PFL_3418 from Pseudomonas fluorescens (strain ATCC BAA-477 / NRRL B-23932 / Pf-5).